The sequence spans 239 residues: Orotidine 5'-phosphate decarboxylase (239 aa).

Substrate is bound by residues Asp15, Lys37, 64–73 (DLKFHDIPNT), Thr126, Arg187, Gln196, Gly216, and Arg217. The active-site Proton donor is the Lys66.

The protein belongs to the OMP decarboxylase family. Type 1 subfamily. As to quaternary structure, homodimer.

It carries out the reaction orotidine 5'-phosphate + H(+) = UMP + CO2. It functions in the pathway pyrimidine metabolism; UMP biosynthesis via de novo pathway; UMP from orotate: step 2/2. Functionally, catalyzes the decarboxylation of orotidine 5'-monophosphate (OMP) to uridine 5'-monophosphate (UMP). The chain is Orotidine 5'-phosphate decarboxylase from Geobacter metallireducens (strain ATCC 53774 / DSM 7210 / GS-15).